Consider the following 819-residue polypeptide: Pentatricopeptide repeat-containing protein At5g02860 (819 aa).

A disordered region spans residues 57 to 93; the sequence is QNPNSRQPISSQTSRNRNRTRIGKSRDPNLGKPWSYH. PPR repeat units lie at residues 172 to 206, 207 to 241, 242 to 277, 278 to 312, 313 to 347, 348 to 382, 383 to 417, 418 to 452, 453 to 487, 488 to 522, 523 to 557, 558 to 592, 593 to 627, 628 to 662, 663 to 697, 698 to 732, 733 to 767, and 768 to 802; these read DNSV…GFSL, DVYS…GCKP, TLIT…GIAP, DAYT…GFSY, DKVT…GFSP, SIVT…GTKP, DVFT…GCKP, NICT…GLSP, DIVT…GFVP, ERET…GVTP, DLST…RCKP, NELT…VIEP, RAVL…GFSP, DITT…GFTP, SMAT…GIKP, DIIS…GIVP, DVIT…GCRP, and NQNT…DPHA.

It belongs to the PPR family. P subfamily.

The chain is Pentatricopeptide repeat-containing protein At5g02860 from Arabidopsis thaliana (Mouse-ear cress).